Here is an 895-residue protein sequence, read N- to C-terminus: Procollagen lysyl hydroxylase and glycosyltransferase (895 aa).

The segment at 1-194 is lysyl hydroxylase region; the sequence is MISRTYVINL…PSDEFIPIMH (194 aa). The segment at 537-895 is glucosyl transferase region; it reads YYFYISGDCI…KRYILVSFVN (359 aa). Residues 805 to 895 form the Fe2OG dioxygenase domain; sequence DINLAFVVKY…KRYILVSFVN (91 aa). Residues His-825, Asp-827, and His-877 each contribute to the Fe cation site. Arg-887 is a catalytic residue.

Requires Fe cation as cofactor. The cofactor is L-ascorbate.

It carries out the reaction L-lysyl-[collagen] + 2-oxoglutarate + O2 = (5R)-5-hydroxy-L-lysyl-[collagen] + succinate + CO2. Displays two enzymatic activities involved in procollagen processing. Forms hydroxylysine residues in -Xaa-Lys-Gly- sequences in collagens. These hydroxylysines are subsequentially glucosylated by a glucosyltransferase activity. Collagen post-translationally modified is detected in mimivirus virion. The chain is Procollagen lysyl hydroxylase and glycosyltransferase from Acanthamoeba polyphaga (Amoeba).